The sequence spans 406 residues: Renin (406 aa).

Positions 1–23 are cleaved as a signal peptide; it reads MDGWRRMPRWGLLLLLWGSCTFG. The propeptide at 24–66 is activation peptide; sequence LPTDTTTFKRIFLKRMPSIRESLKERGVDMARLGPEWSQPMKR. An N-linked (GlcNAc...) asparagine glycan is attached at N71. Residues 86-403 form the Peptidase A1 domain; it reads YYGEIGIGTP…DRRNNRIGFA (318 aa). The active site involves D104. The cysteines at positions 117 and 124 are disulfide-linked. A glycan (N-linked (GlcNAc...) asparagine) is linked at N141. C283 and C287 form a disulfide bridge. D292 is an active-site residue. A disulfide bond links C325 and C362.

This sequence belongs to the peptidase A1 family. In terms of assembly, interacts with ATP6AP2.

The protein localises to the secreted. It is found in the membrane. The enzyme catalyses Cleavage of Leu-|-Xaa bond in angiotensinogen to generate angiotensin I.. Interaction with ATP6AP2 results in a 5-fold increased efficiency in angiotensinogen processing. Functionally, renin is a highly specific endopeptidase, whose only known function is to generate angiotensin I from angiotensinogen in the plasma, initiating a cascade of reactions that produce an elevation of blood pressure and increased sodium retention by the kidney. The sequence is that of Renin (REN) from Macaca fascicularis (Crab-eating macaque).